A 707-amino-acid chain; its full sequence is Matrix metalloproteinase-9 (707 aa).

An N-terminal signal peptide occupies residues 1-19 (MSPRQPLVLALLVLGCCSA). The propeptide at 20–106 (APRRRQPTLV…PRCGVPDVGK (87 aa)) is activation peptide. N-linked (GlcNAc...) asparagine glycosylation is present at Asn88. The Cysteine switch signature appears at 97 to 104 (PRCGVPDV). Position 99 (Cys99) interacts with Zn(2+). N-linked (GlcNAc...) asparagine glycosylation is found at Asn120 and Asn127. Ca(2+) is bound by residues Asp131 and Asp165. Zn(2+) is bound by residues His175 and Asp177. Asp182, Gly183, Asp185, and Leu187 together coordinate Ca(2+). Residue His190 participates in Zn(2+) binding. Residues Gly197, Gln199, and Asp201 each coordinate Ca(2+). His203 is a Zn(2+) binding site. Residues Asp205, Asp206, and Glu208 each coordinate Ca(2+). Fibronectin type-II domains follow at residues 225 to 273 (ADGA…FCPS), 283 to 331 (ADGK…FCPT), and 342 to 390 (SAGE…FCPD). 6 cysteine pairs are disulfide-bonded: Cys230-Cys256, Cys244-Cys271, Cys288-Cys314, Cys302-Cys329, Cys347-Cys373, and Cys361-Cys388. Residue His401 participates in Zn(2+) binding. Glu402 is a catalytic residue. 2 residues coordinate Zn(2+): His405 and His411. The segment at 437–508 (RGIQHLYGPN…ASPSAAPTAS (72 aa)) is disordered. Residues 446–467 (NPNPQPPATTTPEPQPTAPPTA) are compositionally biased toward pro residues. The segment covering 481-493 (PTTSPTGAPSAGP) has biased composition (low complexity). A disulfide bond links Cys516 and Cys704. Hemopexin repeat units lie at residues 518 to 563 (VNVF…WPAL), 564 to 608 (PAKL…GLGP), 610 to 657 (VPHV…FPGV), and 658 to 704 (PLNT…ILHC).

It belongs to the peptidase M10A family. Exists as monomer or homodimer; disulfide-linked. Also exists as heterodimer with LCN2. Macrophages and transformed cell lines produce only the monomeric form. Interacts with ECM1. Requires Zn(2+) as cofactor. Ca(2+) serves as cofactor. In terms of processing, N- and O-glycosylated. Osteoclasts.

It is found in the secreted. Its subcellular location is the extracellular space. The protein resides in the extracellular matrix. The enzyme catalyses Cleavage of gelatin types I and V and collagen types IV and V.. Its function is as follows. Matrix metalloproteinase that plays an essential role in local proteolysis of the extracellular matrix and in leukocyte migration. Could play a role in bone osteoclastic resorption. Cleaves KiSS1 at a Gly-|-Leu bond. Cleaves NINJ1 to generate the Secreted ninjurin-1 form. Cleaves type IV and type V collagen into large C-terminal three quarter fragments and shorter N-terminal one quarter fragments. Degrades fibronectin but not laminin or Pz-peptide. The chain is Matrix metalloproteinase-9 from Oryctolagus cuniculus (Rabbit).